Reading from the N-terminus, the 709-residue chain is PP2C-like domain-containing protein CG9801 (709 aa).

Disordered stretches follow at residues 121 to 222 (DCYG…NSER), 503 to 530 (LHPS…SRPK), and 678 to 709 (GGGE…ETNF). The segment covering 130-143 (PPVQVATQNSTRLT) has biased composition (polar residues). Over residues 182–196 (ANLAAASAGTDAGKA) the composition is skewed to low complexity. Residues 197 to 217 (NSDQNNRNVLNAKTEVSTDGD) are compositionally biased toward polar residues. The PPM-type phosphatase domain occupies 259 to 503 (SVSLYETNML…KSASAIYARL (245 aa)).

This is PP2C-like domain-containing protein CG9801 from Drosophila melanogaster (Fruit fly).